Consider the following 369-residue polypeptide: Phospho-N-acetylmuramoyl-pentapeptide-transferase (369 aa).

10 helical membrane passes run 2 to 22 (IAILLAVAFGITFTLFTTPFF), 54 to 74 (GLVIVVASIISYFLANFFLGL), 80 to 100 (GLLVIFMFVGMSLVGFLDDIL), 113 to 133 (FYKVVLQSFIAVPFALLTFLV), 158 to 178 (ALFSLGIIGVFSAWILYLLWI), 195 to 215 (LDGLAAGAMIFTMLAYVVIGF), 241 to 261 (PLDMSILAAAILGSLLGFLWW), 268 to 288 (IMMGDTGALALGGAAAALSIL), 293 to 313 (LLFLVLGGLFVIEAGSVILQI), and 347 to 367 (FWIIAGLFTALGIGLFYADWL).

This sequence belongs to the glycosyltransferase 4 family. MraY subfamily. The cofactor is Mg(2+).

It localises to the cell membrane. The enzyme catalyses UDP-N-acetyl-alpha-D-muramoyl-L-alanyl-gamma-D-glutamyl-meso-2,6-diaminopimeloyl-D-alanyl-D-alanine + di-trans,octa-cis-undecaprenyl phosphate = di-trans,octa-cis-undecaprenyl diphospho-N-acetyl-alpha-D-muramoyl-L-alanyl-D-glutamyl-meso-2,6-diaminopimeloyl-D-alanyl-D-alanine + UMP. The protein operates within cell wall biogenesis; peptidoglycan biosynthesis. Catalyzes the initial step of the lipid cycle reactions in the biosynthesis of the cell wall peptidoglycan: transfers peptidoglycan precursor phospho-MurNAc-pentapeptide from UDP-MurNAc-pentapeptide onto the lipid carrier undecaprenyl phosphate, yielding undecaprenyl-pyrophosphoryl-MurNAc-pentapeptide, known as lipid I. The protein is Phospho-N-acetylmuramoyl-pentapeptide-transferase of Tropheryma whipplei (strain Twist) (Whipple's bacillus).